Reading from the N-terminus, the 942-residue chain is MDFLNEIASKWQKVWDSERVYEADVDRTKEKKFITVAFPYTNSPLHIGHGRTYITADIYARYLRMKGYNVLFPFAFQFTGTPILSIADAVKRGDEEIISTFTNVYQIPIGVISKFSDPSYLSAYFKEDMRNTALTLGLSIDRRREFTTIDPAFERFVQWQYKRLQEIGYIKKEKAPVAYCPVDEFPVGMHDTRGDIEPEIIDLDVIYFQGEKLLFLTATSRPETIFGAVAILINPDSDYSIVVDNKNGKRLVMSTEAFKKLSFQMSLTEEERKKGGELIGLNVTNPVTLKKLTVLPSKYVESKQGTGVVMAVPAHEPLHYLALSELKESFEIVPVIKSEDYGDFPAMEVLETAQTTSAQELKDYIDTLYRIEFHKGSIRDEVVDLVPDYMKQFVGERIAGKSVREARSSVVELLRNLGVHGNIYEIINGPVYCRCGAEVVVKVFDDQWFIDYSNSTWKSSVLKSLDKIEILPQDAKREISKIIFNMKPRPFTRSRGLGVRLPWDDRQIIDSLSDSTIYTVFYIVANKVKSYPTSILNERFWDYVVLGRGDSSQLSRELGIPKEQLEELRMEVEYWYPVDSRHSGRDLVQNHIPYYLYHHVGVLGEDKVPKRIVLNGFIRVGGKKMSKSFGNVYPLNKAIREYGVDTVRLALTSTSSLSDDIEFSPNIAKSIGEQLKHIHDFIENLIKLQSVNEIRKVDLWISSLISEYIDLIDNCLSNLDLRTAYKTIYYDIYEDLKDYLELGNGKINSDIIKNVISVWIRLMAPFTPHLAEELWHKLDNSLVVRQRFPSKGELQYDKRALLEIEYLRYTIDLINSMKSKMSKEPETVIIYVNEDNTQRDLIRKAIESLKERKSLPDFEKEVGDREMARLAYEIAGDLPDKIKNLAEIGINESEILTSNAQFLLNKLDVKEIYIYNSKDPSTPDIKGKKSIALPYKPGIILT.

The short motif at 39-49 is the 'HIGH' region element; sequence PYTNSPLHIGH. The short motif at 624-628 is the 'KMSKS' region element; it reads KMSKS. Residue Lys-627 coordinates ATP.

This sequence belongs to the class-I aminoacyl-tRNA synthetase family.

The protein localises to the cytoplasm. It carries out the reaction tRNA(Leu) + L-leucine + ATP = L-leucyl-tRNA(Leu) + AMP + diphosphate. This Sulfolobus acidocaldarius (strain ATCC 33909 / DSM 639 / JCM 8929 / NBRC 15157 / NCIMB 11770) protein is Leucine--tRNA ligase 1.